Reading from the N-terminus, the 452-residue chain is CUGBP Elav-like family member 3 (452 aa).

RRM domains lie at 7-88 (IKLF…PADS), 94-174 (RKLF…FADT), and 367-445 (CNIF…LKRP).

The protein belongs to the CELF/BRUNOL family.

It is found in the nucleus. Its subcellular location is the cytoplasm. RNA-binding protein that may be involved in the regulation of pre-mRNA alternative splicing. In Danio rerio (Zebrafish), this protein is CUGBP Elav-like family member 3 (celf3).